Consider the following 426-residue polypeptide: Putative two-component response regulator ARR20 (426 aa).

The 116-residue stretch at 40–155 (SNRVLLVGAD…VIAVLWRHVY (116 aa)) folds into the Response regulatory domain. D91 is modified (4-aspartylphosphate). The tract at residues 161 to 216 (KSGLDKPGESGTVESDPDEYDDLEQDNLYESNEEGSKNTCDHKEEKSPTKKPRMQW) is disordered. The span at 175–193 (SDPDEYDDLEQDNLYESNE) shows a compositional bias: acidic residues. Positions 194-208 (EGSKNTCDHKEEKSP) are enriched in basic and acidic residues. The Nuclear localization signal motif lies at 210-213 (KKPR). The myb-like GARP DNA-binding region spans 213-268 (RMQWTPELHHKFEVAVEKMGSLEKAFPKTILKYMQEELNVQGLTRNNVASHLQKYR).

This sequence belongs to the ARR family. Type-B subfamily. As to quaternary structure, binds the target DNA as a monomer. Post-translationally, two-component system major event consists of a His-to-Asp phosphorelay between a sensor histidine kinase (HK) and a response regulator (RR). In plants, the His-to-Asp phosphorelay involves an additional intermediate named Histidine-containing phosphotransfer protein (HPt). This multistep phosphorelay consists of a His-Asp-His-Asp sequential transfer of a phosphate group between first a His and an Asp of the HK protein, followed by the transfer to a conserved His of the HPt protein and finally the transfer to an Asp in the receiver domain of the RR protein. As to expression, predominantly expressed in mature pistil tip. Also detected in the shoot apical meristem as well as vascular tissue and hydathodes of the leaves.

It is found in the nucleus. In terms of biological role, putative transcriptional activator that binds specifically to the DNA sequence 5'-[AG]GATT-3'. Functions as a response regulator involved in His-to-Asp phosphorelay signal transduction system. Phosphorylation of the Asp residue in the receiver domain activates the ability of the protein to promote the transcription of target genes. Could directly activate some type-A response regulators in response to cytokinins. This chain is Putative two-component response regulator ARR20 (ARR20), found in Arabidopsis thaliana (Mouse-ear cress).